A 970-amino-acid polypeptide reads, in one-letter code: uncharacterized protein (970 aa).

The segment at 942-970 (QLSFEEDGWTESEPRPVRREAHVRAKERH) is disordered. A compositionally biased stretch (basic and acidic residues) spans 953–970 (SEPRPVRREAHVRAKERH).

This is an uncharacterized protein from Frog virus 3 (isolate Goorha) (FV-3).